We begin with the raw amino-acid sequence, 666 residues long: Endogenous retrovirus group K member 6 Gag polyprotein (666 aa).

A lipid anchor (N-myristoyl glycine) is attached at G2. Positions 165–264 (GKGPELVGPS…APPSRQGSKL (100 aa)) are disordered. Over residues 232-247 (GMPPAPQGRAPYPQPP) the composition is skewed to pro residues. 2 CCHC-type zinc fingers span residues 544–561 (RKCYNCGQIGHLKKNCPV) and 580–597 (DLCPRCKKGKHWASQCRS). Positions 598 to 642 (KFDKNGQPLSGNEQRGQPQAPQQTGAFPIQPFVPQGFQGQQPPLS) are disordered. Over residues 604-622 (QPLSGNEQRGQPQAPQQTG) the composition is skewed to polar residues. A compositionally biased stretch (low complexity) spans 624–640 (FPIQPFVPQGFQGQQPP).

This sequence belongs to the beta type-B retroviral Gag protein family. HERV class-II K(HML-2) gag subfamily. Post-translationally, myristoylation is essential for retroviral assembly. Alteration of the glycine residue leads to a block in the budding of particles and an accumulation of Gag inside the cell. In terms of processing, specific enzymatic cleavages may yield mature proteins.

It is found in the cell membrane. Its function is as follows. The products of the Gag polyproteins of infectious retroviruses perform highly complex orchestrated tasks during the assembly, budding, maturation, and infection stages of the viral replication cycle. During viral assembly, the proteins form membrane associations and self-associations that ultimately result in budding of an immature virion from the infected cell. Gag precursors also function during viral assembly to selectively bind and package two plus strands of genomic RNA. Endogenous Gag proteins may have kept, lost or modified their original function during evolution. The polypeptide is Endogenous retrovirus group K member 6 Gag polyprotein (ERVK-6) (Homo sapiens (Human)).